A 294-amino-acid chain; its full sequence is Glyceraldehyde-3-phosphate dehydrogenase (294 aa).

The NAD(+) site is built by aspartate 19, lysine 63, and threonine 105. D-glyceraldehyde 3-phosphate contacts are provided by residues serine 134–threonine 136 and threonine 165. Residue cysteine 135 is the Nucleophile of the active site. The segment at lysine 169–asparagine 188 is disordered. D-glyceraldehyde 3-phosphate contacts are provided by residues threonine 194–glycine 195 and arginine 217.

It belongs to the glyceraldehyde-3-phosphate dehydrogenase family. In terms of assembly, homotetramer.

The protein localises to the cytoplasm. It catalyses the reaction D-glyceraldehyde 3-phosphate + phosphate + NAD(+) = (2R)-3-phospho-glyceroyl phosphate + NADH + H(+). The protein operates within carbohydrate degradation; glycolysis; pyruvate from D-glyceraldehyde 3-phosphate: step 1/5. In terms of biological role, catalyzes the oxidative phosphorylation of glyceraldehyde 3-phosphate (G3P) to 1,3-bisphosphoglycerate (BPG) using the cofactor NAD. The first reaction step involves the formation of a hemiacetal intermediate between G3P and a cysteine residue, and this hemiacetal intermediate is then oxidized to a thioester, with concomitant reduction of NAD to NADH. The reduced NADH is then exchanged with the second NAD, and the thioester is attacked by a nucleophilic inorganic phosphate to produce BPG. In Serratia marcescens, this protein is Glyceraldehyde-3-phosphate dehydrogenase (gap).